The primary structure comprises 390 residues: MLRYLTAGESHGPALITIVEGLPAGLAVEAGYVDRQLARRQGGYGRGKRMAIEQDRVRILSGVRGGLTLGSPVCLQIENRDWENWSTTMAPGPEADTGDRVVTRPRPGHADLAGVLKYGHKDVRNVLERASARETAARVAAGSLARRLLEELGVEILGLVVRIGPVQARIPEVPLDALRARIAESRVMCPDPYAGLSMVEEIDRARDDGDSLGGVFELHAFGVPPGLGSYVQWDRRLDGRLAGALMSIQAVKGVEIGLGFEGAAQRGSEVQDEIFHNGEKGFYRTSNRAGGIEGGVSNGQPVVVRVAMKPIPTLRRPLASVDLVSLTPSEAAFERSDICAVPAACVIGEAVLAFELARACLEKFGGDSMTELLDNHRRYLERIRANRAGG.

NADP(+) is bound by residues Arg-40 and Arg-46. FMN is bound by residues 129 to 131 (RAS), 249 to 250 (QA), Gly-294, 309 to 313 (KPIPT), and Arg-335.

This sequence belongs to the chorismate synthase family. In terms of assembly, homotetramer. Requires FMNH2 as cofactor.

It catalyses the reaction 5-O-(1-carboxyvinyl)-3-phosphoshikimate = chorismate + phosphate. The protein operates within metabolic intermediate biosynthesis; chorismate biosynthesis; chorismate from D-erythrose 4-phosphate and phosphoenolpyruvate: step 7/7. Its function is as follows. Catalyzes the anti-1,4-elimination of the C-3 phosphate and the C-6 proR hydrogen from 5-enolpyruvylshikimate-3-phosphate (EPSP) to yield chorismate, which is the branch point compound that serves as the starting substrate for the three terminal pathways of aromatic amino acid biosynthesis. This reaction introduces a second double bond into the aromatic ring system. In Desulforudis audaxviator (strain MP104C), this protein is Chorismate synthase.